Here is a 478-residue protein sequence, read N- to C-terminus: Serine/threonine-protein phosphatase T (478 aa).

TPR repeat units lie at residues 9–42 (ATAL…YDRE), 43–76 (PSFF…DPAY), and 78–110 (KAYW…EPNN). The segment at 151–463 (AVDDSYDGVR…QVFEAVPHPD (313 aa)) is catalytic. 4 residues coordinate Mn(2+): aspartate 221, histidine 223, aspartate 250, and asparagine 282. The Proton donor/acceptor role is filled by histidine 283. Mn(2+) is bound by residues histidine 331 and histidine 408.

The protein belongs to the PPP phosphatase family. PP-5 (PP-T) subfamily. Mg(2+) serves as cofactor. Requires Mn(2+) as cofactor.

It is found in the nucleus. It catalyses the reaction O-phospho-L-seryl-[protein] + H2O = L-seryl-[protein] + phosphate. The enzyme catalyses O-phospho-L-threonyl-[protein] + H2O = L-threonyl-[protein] + phosphate. Functionally, protein phosphatase that specifically binds to and dephosphorylates the molecular chaperone Hsp90. Dephosphorylation positively regulates the Hsp90 chaperone machinery. This Aspergillus oryzae (strain ATCC 42149 / RIB 40) (Yellow koji mold) protein is Serine/threonine-protein phosphatase T.